A 539-amino-acid polypeptide reads, in one-letter code: Acid-sensing ion channel 4 (539 aa).

Residues 1–68 (MPIEIVCKIK…GPGPHGLRRT (68 aa)) are Cytoplasmic-facing. The chain crosses the membrane as a helical span at residues 69-89 (LWVLALLTSLAAFLYQAASLA). At 90 to 438 (RGYLTRPHLV…EQRAAYGLSA (349 aa)) the chain is on the extracellular side. Disulfide bonds link C118/C202 and C180/C187. Residues N191, N243, N341, and N376 are each glycosylated (N-linked (GlcNAc...) asparagine). 5 disulfide bridges follow: C296-C375, C318-C371, C322-C369, C331-C353, and C333-C345. A helical transmembrane segment spans residues 439–459 (LLGDLGGQMGLFIGASILTLL). Residues 452 to 454 (GAS) carry the GAS motif; ion selectivity filter motif. Topologically, residues 460 to 539 (EILDYIYEVS…PGSLFEDFAC (80 aa)) are cytoplasmic. The tract at residues 501–531 (EQSPCPNRGRAEGGGASNLLPNHHHPHGPPG) is disordered.

Belongs to the amiloride-sensitive sodium channel (TC 1.A.6) family. ASIC4 subfamily. As to quaternary structure, homotrimer. Heterotrimer; with other ASIC proteins producing functional channels. In terms of tissue distribution, expressed in brain, spinal cord and dorsal root ganglion (DRG). Expressed by a subset of sensory neurons in the DRG. Expressed by granule cells in the cerebellar cortex. In hippocampus, expression is detected in dentate gyrus granule cells, in pyramidal cells of CA1-CA3 subfields and in interneurons of the striatum oriens and radiatum of all subfields. In cerebral cortex expressed in small, medium and large pyramidal cells in layers 2, 3 and 5 respectively. Also expressed in striatum, globus pallidus, inferior and superior calliculi, amygdala, magnocellular preoptic nucleus, islands of Calleja and large neurons of olfactory tubercules.

Its subcellular location is the cell membrane. Does not exhibit measurable stand-alone pH-gated sodium channel activity but may form pH-gated heterotrimeric sodium channels. Its activity could also depend on alternative gating mechanisms. This Rattus norvegicus (Rat) protein is Acid-sensing ion channel 4.